The following is an 808-amino-acid chain: Phenylalanine--tRNA ligase beta subunit (808 aa).

The region spanning 40–157 is the tRNA-binding domain; the sequence is NKGATNVVVG…QSVEPGQDAL (118 aa). In terms of domain architecture, B5 spans 411-486; that stretch reads RSERVIALDL…RLYGYDELPS (76 aa). Mg(2+)-binding residues include D464, D470, E473, and E474. Positions 714 to 807 constitute an FDX-ACB domain; the sequence is PRYPAITRDM…VQKQTGAVLR (94 aa).

The protein belongs to the phenylalanyl-tRNA synthetase beta subunit family. Type 1 subfamily. In terms of assembly, tetramer of two alpha and two beta subunits. Mg(2+) serves as cofactor.

Its subcellular location is the cytoplasm. The catalysed reaction is tRNA(Phe) + L-phenylalanine + ATP = L-phenylalanyl-tRNA(Phe) + AMP + diphosphate + H(+). The sequence is that of Phenylalanine--tRNA ligase beta subunit from Shouchella clausii (strain KSM-K16) (Alkalihalobacillus clausii).